Reading from the N-terminus, the 586-residue chain is Dolichyl-diphosphooligosaccharide--protein glycosyltransferase subunit 1 (586 aa).

The N-terminal stretch at 1–15 (MRLLFAIALLGAVFA) is a signal peptide. The Lumenal portion of the chain corresponds to 16–421 (EDAWKAANVD…EFEFVDMLRE (406 aa)). Residues 422 to 442 (PLLASAFFFSLFFVIIVYSRF) form a helical membrane-spanning segment. Residues 443 to 586 (DFTISSDPAK…NRADSVLASI (144 aa)) are Cytoplasmic-facing.

Belongs to the OST1 family. As to quaternary structure, component of the oligosaccharyltransferase (OST) complex.

The protein resides in the endoplasmic reticulum membrane. Its subcellular location is the cytoplasmic granule. It participates in protein modification; protein glycosylation. Its function is as follows. Subunit of the oligosaccharyl transferase (OST) complex that catalyzes the initial transfer of a defined glycan (Glc(3)Man(9)GlcNAc(2) in eukaryotes) from the lipid carrier dolichol-pyrophosphate to an asparagine residue within an Asn-X-Ser/Thr consensus motif in nascent polypeptide chains, the first step in protein N-glycosylation. N-glycosylation occurs cotranslationally and the complex associates with the Sec61 complex at the channel-forming translocon complex that mediates protein translocation across the endoplasmic reticulum (ER). All subunits are required for a maximal enzyme activity. The chain is Dolichyl-diphosphooligosaccharide--protein glycosyltransferase subunit 1 from Caenorhabditis elegans.